Reading from the N-terminus, the 456-residue chain is Glycerol-3-phosphate acyltransferase 4 (456 aa).

An N-terminal signal peptide occupies residues 1-37 (MFLLLPFDSLIVSLLGISLTVLFTLLLVFIIVPAVFG). The next 2 membrane-spanning stretches (helical) occupy residues 156 to 176 (ISLR…CLLL) and 180 to 200 (IALA…VGYL). An N-linked (GlcNAc...) asparagine glycan is attached at N247. The HXXXXD motif motif lies at 248 to 253 (HTSPID). Residues N327, N328, and N362 are each glycosylated (N-linked (GlcNAc...) asparagine).

This sequence belongs to the 1-acyl-sn-glycerol-3-phosphate acyltransferase family.

The protein localises to the endoplasmic reticulum membrane. The enzyme catalyses sn-glycerol 3-phosphate + an acyl-CoA = a 1-acyl-sn-glycero-3-phosphate + CoA. It catalyses the reaction dodecanoyl-CoA + sn-glycerol 3-phosphate = 1-dodecanoyl-sn-glycerol 3-phosphate + CoA. It carries out the reaction sn-glycerol 3-phosphate + hexadecanoyl-CoA = 1-hexadecanoyl-sn-glycero-3-phosphate + CoA. The catalysed reaction is sn-glycerol 3-phosphate + octadecanoyl-CoA = 1-octadecanoyl-sn-glycero-3-phosphate + CoA. The enzyme catalyses sn-glycerol 3-phosphate + (9Z)-octadecenoyl-CoA = 1-(9Z-octadecenoyl)-sn-glycero-3-phosphate + CoA. It catalyses the reaction (9Z,12Z)-octadecadienoyl-CoA + sn-glycerol 3-phosphate = 1-(9Z,12Z)-octadecadienoyl-sn-glycero-3-phosphate + CoA. The protein operates within phospholipid metabolism; CDP-diacylglycerol biosynthesis; CDP-diacylglycerol from sn-glycerol 3-phosphate: step 1/3. Its function is as follows. Converts glycerol-3-phosphate to 1-acyl-sn-glycerol-3-phosphate (lysophosphatidic acid or LPA) by incorporating an acyl moiety at the sn-1 position of the glycerol backbone. Active against both saturated and unsaturated long-chain fatty acyl-CoAs. Protects cells against lipotoxicity. The sequence is that of Glycerol-3-phosphate acyltransferase 4 from Bos taurus (Bovine).